Consider the following 271-residue polypeptide: Hematopoietically-expressed homeobox protein Hhex (271 aa).

Positions 1-138 (MQFPHPGPAA…PFLQRPLHKR (138 aa)) are interaction with SOX13. Residue Ser54 is modified to Phosphoserine. Residues 138–197 (RKGGQVRFSNDQTVELEKKFETQKYLSPPERKRLAKMLQLSERQVKTWFQNRRAKWRRLK) constitute a DNA-binding region (homeobox). The interval 138–271 (RKGGQVRFSN…EGDKGYFNAG (134 aa)) is required for WNT signaling induction. Positions 195–271 (RLKQENPQSN…EGDKGYFNAG (77 aa)) are disordered. Residues 212–242 (LDTSCEQGQDLPSEQNKGASLDRSQCSPSPA) are compositionally biased toward polar residues. Residues 245–261 (EDPDSEISEDSDQEVDI) are compositionally biased toward acidic residues.

As to quaternary structure, interacts with CD81; the interaction prevents nuclear translocation of HHEX. Interacts (via N-terminus) with SOX13; abolishes the SOX13-mediated inhibition of WNT-mediated transcriptional activity via competitive inhibition of the SOX13-TCF7 complex. Interacts with EIF4E; the interaction inhibits EIF4E-mediated mRNA nuclear export.

The protein resides in the nucleus. It localises to the nuclear body. It is found in the cytoplasm. Recognizes the DNA sequence 5'-ATTAA-3'. Transcriptional repressor. Activator of WNT-mediated transcription in conjunction with CTNNB1. Establishes anterior identity at two levels; acts early to enhance canonical WNT-signaling by repressing expression of TLE4, and acts later to inhibit NODAL-signaling by directly targeting NODAL. Inhibits EIF4E-mediated mRNA nuclear export. May play a role in hematopoietic differentiation. This Mus musculus (Mouse) protein is Hematopoietically-expressed homeobox protein Hhex (Hhex).